Reading from the N-terminus, the 69-residue chain is M-poneratoxin-Dq4e (69 aa).

An N-terminal signal peptide occupies residues 1 to 25 (MKLSAFTLAFALILMMAIMYNMAEA). The propeptide occupies 26-39 (AALADADADAEAIA).

In terms of tissue distribution, expressed by the venom gland.

The protein resides in the secreted. In terms of biological role, may have antimicrobial properties, like most ant linear peptides. In addition, when tested in vitro on the parasite Trypanosoma cruzi (responsible of the Chagas disease), is able to moderately reduce the number of the three forms (epimastigote, trypomastigote and amastigote) by inducing cell death through necrosis. This Dinoponera quadriceps (South American ant) protein is M-poneratoxin-Dq4e.